The chain runs to 207 residues: Holliday junction resolvase RecU (207 aa).

The disordered stretch occupies residues Met-1–Ser-21. Positions 87, 89, 102, and 121 each coordinate Mg(2+).

The protein belongs to the RecU family. The cofactor is Mg(2+).

It is found in the cytoplasm. It catalyses the reaction Endonucleolytic cleavage at a junction such as a reciprocal single-stranded crossover between two homologous DNA duplexes (Holliday junction).. In terms of biological role, endonuclease that resolves Holliday junction intermediates in genetic recombination. Cleaves mobile four-strand junctions by introducing symmetrical nicks in paired strands. Promotes annealing of linear ssDNA with homologous dsDNA. Required for DNA repair, homologous recombination and chromosome segregation. The sequence is that of Holliday junction resolvase RecU from Lactiplantibacillus plantarum (strain ATCC BAA-793 / NCIMB 8826 / WCFS1) (Lactobacillus plantarum).